Here is a 1197-residue protein sequence, read N- to C-terminus: Disease resistance-like protein CSA1 (1197 aa).

The region spanning 15-178 (PQDQVFINFR…IIIRKVKEIL (164 aa)) is the TIR domain. Glu89 is a catalytic residue. In terms of domain architecture, NB-ARC spans 210–480 (RIKQLEEKLR…ACFRSQDENY (271 aa)). LRR repeat units lie at residues 614-636 (LNEVRYLHWLKFPLKEVPQDFNP), 638-659 (NLVDLKLPYSEIERVWEDNKDA), 694-716 (TALKEMHVDMENMKFLVFLNLRG), 728-749 (LISLKTLILSGCSKFKTFQVIS), 750-774 (DKLEALYLDGTAIKELPCDIGRLQR), 776-796 (VMLNMKGCKKLKRLPDSLGQL), 797-819 (KALEELILSGCSKLNEFPETWGN), 820-843 (MSRLEILLLDETAIKDMPKILSVR), 845-862 (LCLNKNEKISRLPDLLNK), and 863-889 (FSQLQWLHLKYCKNLTHVPQLPPNLQY).

The enzyme catalyses NAD(+) + H2O = ADP-D-ribose + nicotinamide + H(+). TIR-NB-LRR receptor-like protein that functions in photomorphogenic development. May function downstream of phytochrome B (phyB) signaling. This chain is Disease resistance-like protein CSA1, found in Arabidopsis thaliana (Mouse-ear cress).